The sequence spans 641 residues: MKTPTSTIQTNAATATHGNLVSTSNANFSEHMDERSSVLTQDTQEFLTDLLNRQKTRLNELSSHLSSMAHSETFLSSLKSSMHWPVEELTCDKVVTLLTKLKDTDVAANSVETLIEKLKDSSRGILRADNVSSLDAIDISKQNDLLWKELETFRHIRGILESFLQTHYSKSSRLINQESVEVLMGQLLEHEKDNLRLREQVVEKETKVEDLLHLIQQEKDTAVKSNQVSRSTEATHIRLQNLVKRKETENQQIVTQIQSLAAVISGRKLEIEDLRREITHLKEKQTFEKEGLKKAFRVQKQKVDNFQDVMENLNTQIKKKETELSEVHSSCSIWKDHHDSAVETKTRLEVQHESLTKQISDHLKLIKTMDEEREQSKEENAEKISAIILENAHFSEENVKLKASIAALESETVLVNSELLEVREKASQQKHFAEQYENQVQKLQEELNKLKEKFKDVLTKKKEILENKASENKKVDTNDYFLGNESFKLENNRIERKCEEIRIKLEKMIMHNEQLESKLKGQERDLQRSEVELEGKAKECSTLMRLLENAVEAGNKQISEENNKVLSKELALQRKLQSLESELKRKRAEHKQLGCTLNAFEKTHNLRLEEIRHSLEMTESRNKSIQSYVQFLKTSYAAMFE.

Coiled coils occupy residues 83–144 (HWPV…KQND), 191–270 (EKDN…RKLE), 299–375 (QKQK…EREQ), and 487–599 (FKLE…TLNA).

Belongs to the ODF2 family.

Its subcellular location is the cytoplasm. The protein resides in the cytoskeleton. The protein localises to the microtubule organizing center. It localises to the centrosome. It is found in the centriole. Its subcellular location is the centriolar satellite. The protein resides in the cilium basal body. In terms of biological role, acts as a suppressor of ciliogenesis, specifically, the initiation of ciliogenesis. The protein is Protein BCAP (odf2l) of Xenopus laevis (African clawed frog).